Here is a 457-residue protein sequence, read N- to C-terminus: Cation efflux system protein CusC (457 aa).

An N-terminal signal peptide occupies residues 1 to 17 (MSPCKLLPFCVALALTG). Residue cysteine 18 is the site of N-palmitoyl cysteine attachment. Cysteine 18 is lipidated: S-diacylglycerol cysteine.

The protein belongs to the outer membrane factor (OMF) (TC 1.B.17) family. In terms of assembly, homotrimer. Component of the cus efflux system composed of CusA, CusB, CusC and CusF.

The protein resides in the cell outer membrane. In terms of biological role, forms pores that allow passive diffusion of cations across the outer membrane. Part of a cation efflux system that mediates resistance to copper and silver. In pathogenic strains it allows the bacteria to invade brain microvascular endothelial cells (BMEC) thus allowing it to cross the blood-brain barrier and cause neonatal meningitis. The sequence is that of Cation efflux system protein CusC (cusC) from Escherichia coli (strain K12).